The chain runs to 596 residues: Actin-histidine N-methyltransferase (596 aa).

S-adenosyl-L-methionine-binding positions include Arg75, 104–106, Arg254, 275–279, and 325–327; these read EGY, DMCNH, and NGF. Positions 94–314 constitute an SET domain; the sequence is DGFEISNFAD…EGEQIYIFYG (221 aa). The tract at residues 556–596 is disordered; it reads QCKDLNGTQEDPPGGGAVVKEIEKHDPSAKRTEGEPKDAGK. A compositionally biased stretch (basic and acidic residues) spans 575–596; sequence KEIEKHDPSAKRTEGEPKDAGK.

It belongs to the class V-like SAM-binding methyltransferase superfamily. SETD3 actin-histidine methyltransferase family.

The protein localises to the cytoplasm. The catalysed reaction is L-histidyl-[protein] + S-adenosyl-L-methionine = N(tele)-methyl-L-histidyl-[protein] + S-adenosyl-L-homocysteine + H(+). Its function is as follows. Protein-histidine N-methyltransferase that specifically mediates 3-methylhistidine (tele-methylhistidine) methylation of actin at 'His-73'. Does not have protein-lysine N-methyltransferase activity and probably only catalyzes histidine methylation of actin. This is Actin-histidine N-methyltransferase from Danio rerio (Zebrafish).